The primary structure comprises 389 residues: Lipid-A-disaccharide synthase (389 aa).

Belongs to the LpxB family.

The enzyme catalyses a lipid X + a UDP-2-N,3-O-bis[(3R)-3-hydroxyacyl]-alpha-D-glucosamine = a lipid A disaccharide + UDP + H(+). The protein operates within bacterial outer membrane biogenesis; LPS lipid A biosynthesis. Condensation of UDP-2,3-diacylglucosamine and 2,3-diacylglucosamine-1-phosphate to form lipid A disaccharide, a precursor of lipid A, a phosphorylated glycolipid that anchors the lipopolysaccharide to the outer membrane of the cell. This chain is Lipid-A-disaccharide synthase, found in Burkholderia multivorans (strain ATCC 17616 / 249).